We begin with the raw amino-acid sequence, 188 residues long: MSTRAPVELDFLGLRAAAADADDRHAKSGGSSASSSSSIRGMETSAIARIGPHLLRRVIAAARPPPPPSTAPVPEEMPGAAAAAAPMTLFYNGSVAVFDVSHDKAEAIMRMATEATKAKGLARGNAIVGNFAKEPLTRTKSLQRFLSKRKERLTSLGPYQVGGPAAVGATTSTTTKSFLAKEEEHTAS.

The tract at residues 20 to 41 (DADDRHAKSGGSSASSSSSIRG) is disordered. The segment covering 28-38 (SGGSSASSSSS) has biased composition (low complexity). The Tify domain maps to 80–114 (AAAAAAPMTLFYNGSVAVFDVSHDKAEAIMRMATE). Residues 135 to 160 (PLTRTKSLQRFLSKRKERLTSLGPYQ) carry the Jas motif. Positions 156-188 (LGPYQVGGPAAVGATTSTTTKSFLAKEEEHTAS) are disordered. Residues 179–188 (LAKEEEHTAS) show a composition bias toward basic and acidic residues.

The protein belongs to the TIFY/JAZ family. In terms of processing, ubiquitinated. Targeted for degradation by the SCF(COI1) E3 ubiquitin ligase-proteasome pathway during jasmonate signaling.

In terms of biological role, repressor of jasmonate responses. This chain is Protein TIFY 9, found in Oryza sativa subsp. indica (Rice).